Here is a 111-residue protein sequence, read N- to C-terminus: HTH-type transcriptional regulator SinR (111 aa).

The 56-residue stretch at 6–61 folds into the HTH cro/C1-type domain; it reads IKQYRKEKGYSLSELAEKAGVAKSYLSSIERNLQTNPSIQFLEKVSAVLDVSVHTL. The H-T-H motif DNA-binding region spans 17 to 36; it reads LSELAEKAGVAKSYLSSIER. Residues 65–103 form the Sin domain; it reads KHETEYDGQLDSEWEKLVRDAMTSGVSKKQFREFLDYQK.

As to quaternary structure, homotetramer in the absence of SinI. Heterodimer with SinI. Interaction with SinI disrupts the SinR tetramer and its repressor activity. Interacts with hpr.

Its function is as follows. Negative as well as positive regulator of alternate developmental processes that are induced at the end of vegetative growth in response to nutrient depletion. Binds to the alkaline protease (aprE) gene at two sites. Also acts as a repressor of the key sporulation gene spo0A. Negatively regulates transcription of the eps operon, which is responsible for the biosynthesis of an exopolysaccharide involved in biofilm formation; therefore it could govern the transition between a state in which bacteria swim or swarm and a state in which bacteria assemble into multicellular communities. Acts with Hpr as a corepressor of epr expression. Also negatively regulates transcription of the lutABC operon, which is required for lactate utilization. Repressor activity is regulated by SinI. This Bacillus subtilis (strain 168) protein is HTH-type transcriptional regulator SinR (sinR).